The chain runs to 152 residues: Transcriptional regulator MraZ (152 aa).

2 consecutive SpoVT-AbrB domains span residues 5–52 (ATLV…PLPE) and 81–124 (ASEC…DETT).

Belongs to the MraZ family. As to quaternary structure, dodecamer.

It is found in the cytoplasm. The protein localises to the nucleoid. In terms of biological role, negatively regulates its own expression and that of the subsequent genes in the proximal part of the division and cell wall (dcw) gene cluster. Acts by binding directly to DNA. May also regulate the expression of genes outside the dcw cluster. This Escherichia coli (strain K12) protein is Transcriptional regulator MraZ.